The chain runs to 387 residues: 3-ketoacyl-CoA thiolase (387 aa).

Catalysis depends on Cys-91, which acts as the Acyl-thioester intermediate. Catalysis depends on proton acceptor residues His-343 and Cys-373.

The protein belongs to the thiolase-like superfamily. Thiolase family. As to quaternary structure, heterotetramer of two alpha chains (FadB) and two beta chains (FadA).

The protein resides in the cytoplasm. The enzyme catalyses an acyl-CoA + acetyl-CoA = a 3-oxoacyl-CoA + CoA. It functions in the pathway lipid metabolism; fatty acid beta-oxidation. Its function is as follows. Catalyzes the final step of fatty acid oxidation in which acetyl-CoA is released and the CoA ester of a fatty acid two carbons shorter is formed. The sequence is that of 3-ketoacyl-CoA thiolase from Shigella flexneri serotype 5b (strain 8401).